A 476-amino-acid chain; its full sequence is MARDTQGTQGTQSQASNIWTQVESQPMEKIVWGRLYGKNIKIKSLGTSSKYRIIYTHSSFSVDLNNDEFTAGRGEANDLILTLNDLPEKILTRISKVHFIIKRANCELTNPVYIQDLSRNGTFVNNEKIGTNRMRILKNDDVISLSHPTYKAFVFKDLSPNESIGLPEEINKTYYVNRKLGSGAYGLVRLVYDTRTCQQFAMKIVKKNMLSGARPSTNFSDPDRVLNEAKIMKNLSHPCVVRMHDIVDKPDSVYMVLEFMRGGDLLNRIISNKLLSEDISKLYFYQMCHAVKYLHDRGITHRDLKPDNVLLETNDEETLLKVSDFGLSKFVQKDSVMRTLCGTPLYVAPEVLITGGREAYTKKVDIWSLGVVLFTCLSGTLPFSDEYGTPAAQQIKKGRFAYGHPSWKSVSQRAKLLINQMLIVDPERRPSIDDVLQSSWLRDAPMLQKAKRLMKLDGMEIEEENFLEPPTKRSRR.

The region spanning 69–129 (FTAGRGEAND…NGTFVNNEKI (61 aa)) is the FHA domain. Positions 174 to 441 (YYVNRKLGSG…IDDVLQSSWL (268 aa)) constitute a Protein kinase domain. Residues 180–188 (LGSGAYGLV) and K203 contribute to the ATP site. The Proton acceptor role is filled by D303.

This sequence belongs to the protein kinase superfamily. CAMK Ser/Thr protein kinase family. CDS1 subfamily. In stage 3 embryos, both isoforms are expressed in both somatic and pole cell nuclei. Expression in pole cell nuclei is sustained until stage 9 and weakly expressed after pole cell invagination into the abdominal cavity.

It is found in the nucleus speckle. It carries out the reaction L-seryl-[protein] + ATP = O-phospho-L-seryl-[protein] + ADP + H(+). The catalysed reaction is L-threonyl-[protein] + ATP = O-phospho-L-threonyl-[protein] + ADP + H(+). May have a role in germline establishment. This is Ovarian-specific serine/threonine-protein kinase Lok (lok) from Drosophila melanogaster (Fruit fly).